The sequence spans 504 residues: Chromosomal replication initiator protein DnaA (504 aa).

Residues Met1–Asp109 form a domain I, interacts with DnaA modulators region. The interval Ala98 to Ala162 is disordered. Residues Asp109–Ala125 show a composition bias toward low complexity. Residues Ser110 to Val163 are domain II. The segment at Asn164–Ala380 is domain III, AAA+ region. The ATP site is built by Gly208, Gly210, Lys211, and Thr212. The domain IV, binds dsDNA stretch occupies residues Ser381–Arg504.

This sequence belongs to the DnaA family. As to quaternary structure, oligomerizes as a right-handed, spiral filament on DNA at oriC.

The protein resides in the cytoplasm. Its function is as follows. Plays an essential role in the initiation and regulation of chromosomal replication. ATP-DnaA binds to the origin of replication (oriC) to initiate formation of the DNA replication initiation complex once per cell cycle. Binds the DnaA box (a 9 base pair repeat at the origin) and separates the double-stranded (ds)DNA. Forms a right-handed helical filament on oriC DNA; dsDNA binds to the exterior of the filament while single-stranded (ss)DNA is stabiized in the filament's interior. The ATP-DnaA-oriC complex binds and stabilizes one strand of the AT-rich DNA unwinding element (DUE), permitting loading of DNA polymerase. After initiation quickly degrades to an ADP-DnaA complex that is not apt for DNA replication. Binds acidic phospholipids. Functionally, the probable consensus sequence for the DnaA box of this bacterium is 5'-TT(G/C)TCCACA-3'. The chain is Chromosomal replication initiator protein DnaA from Mycolicibacterium smegmatis (strain ATCC 700084 / mc(2)155) (Mycobacterium smegmatis).